A 275-amino-acid chain; its full sequence is NH(3)-dependent NAD(+) synthetase (275 aa).

50-57 (GISGGVDS) is a binding site for ATP. Asp56 is a Mg(2+) binding site. A deamido-NAD(+)-binding site is contributed by Arg147. ATP is bound at residue Thr167. Position 172 (Glu172) interacts with Mg(2+). The deamido-NAD(+) site is built by Lys180 and Asp187. 2 residues coordinate ATP: Lys196 and Thr218. Deamido-NAD(+) is bound at residue 267–268 (HK).

This sequence belongs to the NAD synthetase family. As to quaternary structure, homodimer.

The catalysed reaction is deamido-NAD(+) + NH4(+) + ATP = AMP + diphosphate + NAD(+) + H(+). The protein operates within cofactor biosynthesis; NAD(+) biosynthesis; NAD(+) from deamido-NAD(+) (ammonia route): step 1/1. Its function is as follows. Catalyzes the ATP-dependent amidation of deamido-NAD to form NAD. Uses ammonia as a nitrogen source. This Pseudomonas syringae pv. syringae (strain B728a) protein is NH(3)-dependent NAD(+) synthetase.